A 650-amino-acid chain; its full sequence is MSDLVKVTLPDGSQKEAPRGTPVIDFVKGQIGAGLAKAAYFAKLDGAPVDLSRALDRDARLEIVTTRSPEALEVARHDAAHVMASVVQKLYPGTQVTIGPAIEDGFYYDFARETPFTPEDLEKIEKATNEAIKADLPFVRSEISMEAALALFEGMGERYKVEIVKDIAAKGAKTLTLYKHGDWVDFCLGPHGPSTGRIGVVKLLNVAGAYWRGDAKNAMLQRIYGTAFFDKKELDAHLAKLEEVKKRDHRRLGPQLGLFTFHEYAPGAPFWLPAGTVLYNVLEDAMRRLVLKNGYQEVKTPLLFNKRLWETSGHWGKYRENMFLVVDSESDPALALEDRCSFSLKPMNCPSHHLIYRMDKRSYRELPVRYFTTDALHRNEASGSLGGLTRVRQFEQDDAHIYLREEQVTDEVLRIFELMKVVYGAFGLGFEATFSTRPEQRIGDDALWDRAEALLRKSLDATGLKWTLNPGDGAFYGPKIDMLVTDSLGRRWQTCTIQLDYAAPERFDLTFVGEDNKEHRPVVIHRAIYGSFERFIAILTEHYAGAFPAWLAPVQARVVTVSDRFDAWAREAAAALQARGWRVEVDGSSDKLGAKIRNAQLAKIPFTLVVGEKEVEARGVSPRRHGGEDLKTMPLETFAELMAREATAPF.

Positions 3 to 65 constitute a TGS domain; it reads DLVKVTLPDG…DRDARLEIVT (63 aa). A catalytic region spans residues 248 to 548; it reads DHRRLGPQLG…LTEHYAGAFP (301 aa). Cys349, His400, and His525 together coordinate Zn(2+).

This sequence belongs to the class-II aminoacyl-tRNA synthetase family. In terms of assembly, homodimer. Zn(2+) serves as cofactor.

The protein resides in the cytoplasm. It catalyses the reaction tRNA(Thr) + L-threonine + ATP = L-threonyl-tRNA(Thr) + AMP + diphosphate + H(+). Catalyzes the attachment of threonine to tRNA(Thr) in a two-step reaction: L-threonine is first activated by ATP to form Thr-AMP and then transferred to the acceptor end of tRNA(Thr). Also edits incorrectly charged L-seryl-tRNA(Thr). This chain is Threonine--tRNA ligase, found in Anaeromyxobacter dehalogenans (strain 2CP-C).